The primary structure comprises 86 residues: Haditoxin (86 aa).

A signal peptide spans 1–21; it reads MKTLLLTLVVVTIVYLDLGYT. 4 disulfides stabilise this stretch: Cys-24–Cys-45, Cys-38–Cys-62, Cys-66–Cys-78, and Cys-79–Cys-84.

Belongs to the three-finger toxin family. Short-chain subfamily. Orphan group VIII (haditoxin) sub-subfamily. As to quaternary structure, homodimer; non-covalently linked. As to expression, expressed by the venom gland.

The protein localises to the secreted. In terms of biological role, antagonist of muscle (alpha-1-beta-1-delta-epsilon/CHRNA1-CHRNB1-CHRND-CHRNE) and neuronal (alpha-7/CHRNA7, alpha-3-beta-2/CHRNA3-CHRNB2, alpha-4-beta-2/CHRNA4-CHRNB2) nicotinic acetylcholine receptors (nAChR). The highest affinity is for human alpha-7/CHRNA7 nAChRs (IC(50)=180 nM), compared to human alpha-1-beta-1-delta-epsilon/CHRNA1-CHRNB1-CHRND-CHRNE nAChR (IC(50)= 550 nM), alpha-3-beta-2/CHRNA3-CHRNB2 nAChR (IC(50)=500 nM), and alpha-4-beta-2/CHRNA4-CHRNB2 nAChR (IC(50)=2.6 uM). This Ophiophagus hannah (King cobra) protein is Haditoxin.